Here is a 365-residue protein sequence, read N- to C-terminus: N5-carboxyaminoimidazole ribonucleotide synthase (365 aa).

ATP-binding positions include Arg93, Lys132, 137–143, 168–171, Glu176, His199, and 249–250; these read GYDGKGQ, EEFV, and NE. Positions 97 to 279 constitute an ATP-grasp domain; sequence KLFLKKHGFP…QFENLLRAIT (183 aa).

Belongs to the PurK/PurT family. Homodimer.

The enzyme catalyses 5-amino-1-(5-phospho-beta-D-ribosyl)imidazole + hydrogencarbonate + ATP = 5-carboxyamino-1-(5-phospho-D-ribosyl)imidazole + ADP + phosphate + 2 H(+). It participates in purine metabolism; IMP biosynthesis via de novo pathway; 5-amino-1-(5-phospho-D-ribosyl)imidazole-4-carboxylate from 5-amino-1-(5-phospho-D-ribosyl)imidazole (N5-CAIR route): step 1/2. Functionally, catalyzes the ATP-dependent conversion of 5-aminoimidazole ribonucleotide (AIR) and HCO(3)(-) to N5-carboxyaminoimidazole ribonucleotide (N5-CAIR). The protein is N5-carboxyaminoimidazole ribonucleotide synthase of Aquifex aeolicus (strain VF5).